The sequence spans 543 residues: MGPIHNYFGVVCLGIAASVYFRPECALYGSRIATFAVLLTGIAISKLLYQLFIYPQFVTPLKHFPAPPNRHWLTGNTGSLLVDTPHALMKEWAKTIPNDGILRYYIVGNMERLTVTSPAVLREILVSKAYEFAKPLVIQQTLRRVLGNGILIAEGEEHKFQRKNLKPAFAYRHVKDLYSVFWSKGTEMTKLIRKDLQSRKAPDDNTIQVRTWASRSSLDIIGLAGMGRDFGSLQDPENSLSQSYEMIFATPGLGTKILFILGMLLGNTTWLAKLPTKQNRLIDTGCRNIRDATRRMIREQKAKMEDPNAAAEVDIISVAMRSGNFDDDNLIDQLMTFLGAGHETTAGALQWAIYALCKHPDVQSRLREEVRANLPPIHGENPGPIDAATIDSLPYLNAVCNEVIRFHPSVPNTVRVALNDTTLMGHPIPKGTQVVISPELVNHMPALWGPDAERFNPDRWMGPGKANTGGAASNYAFLSFLHGPRSCIGQVFAKAELACLLAAVVGSFAFELKSPDAPLEVREGATIAPKDGVLAKFTPVEGW.

A run of 2 helical transmembrane segments spans residues 1 to 21 and 32 to 52; these read MGPIHNYFGVVCLGIAASVYF and IATFAVLLTGIAISKLLYQLF. Position 487 (cysteine 487) interacts with heme.

This sequence belongs to the cytochrome P450 family. The cofactor is heme.

Its subcellular location is the membrane. The enzyme catalyses presphingofungin + 2 reduced [NADPH--hemoprotein reductase] + O2 = sphingofungin B1 + 2 oxidized [NADPH--hemoprotein reductase] + H2O + 2 H(+). The protein operates within secondary metabolite biosynthesis. Its function is as follows. Cytochrome P450 monooxygenase; part of the gene cluster that mediates the biosynthesis of sphingofungins, bioactive molecules acting as sphingolipid inhibitors via inhibiting serine palmitoyl transferase (SPT). Within the pathway, sphH catalyzes the conversion of presphingofungin into sphingofungin B1 via hydroxylagtion at position C-14. Sphingofungin biosynthesis starts with the PKS sphB that produces an C18 polyketide precursor 3-hydroxyoctadeca-4,10-dienoyl-ACP containing one delta-6 desaturation and one delta-12 desaturation. The aminoacyl transferase sphA uses the sphB product to produce 3-keto-presphingofungin by adding an aminomalonate molecule. SphF then reduces the C-3 ketone of 3-keto-presphingofungin which leads to presphingofungin. The cytochrome P450 monooxygenase sphH converts presphingofungin into sphingofungin B1 which is further converted to sphingofungin B by the dioxygenase sphC. SphC is also able to convert presphingofungin into sphingofungin B2. The acetyltransferase sphE acetylates sphingofungin B to produce sphingofungin C, but can also convert sphingofungin B1 into sphingofungin C1 and sphingofungin B2 into sphingofungin C2. Finally, sphingofungin C can be spontaneously converted into sphingofungin D. The sequence is that of Cytochrome P450 monooxygenase sphH from Aspergillus fumigatus (strain CBS 144.89 / FGSC A1163 / CEA10) (Neosartorya fumigata).